A 472-amino-acid polypeptide reads, in one-letter code: Protein hedgehog (472 aa).

Cys-84 carries N-palmitoyl cysteine lipidation. Residues Glu-149, Asp-154, Glu-185, Asp-188, and Asp-190 each coordinate Ca(2+). Gly-256 is lipidated: Cholesterol glycine ester.

The protein belongs to the hedgehog family. In terms of assembly, interacts with shf. In terms of processing, the C-terminal part of the hedgehog protein precursor displays an autoproteolysis activity that results in the cleavage of the full-length protein into two parts (N-product and C-product). In addition, the C-terminal part displays a cholesterol transferase activity that results by the covalent attachment of a cholesterol moiety to the C-terminal of the newly generated N-product. The N-product is the active species in both local and long-range signaling, whereas the C-product has no signaling activity. Cholesterylation is required for N-product targeting to lipid rafts and multimerization. Post-translationally, N-palmitoylation by Rasp of the hedgehog N-product, within the secretory pathway, is required for the embryonic and larval patterning activities of the hedgehog signal.

The protein localises to the nucleus. It localises to the cytoplasm. Its subcellular location is the cell membrane. The enzyme catalyses glycyl-L-cysteinyl-[protein] + cholesterol + H(+) = [protein]-C-terminal glycyl cholesterol ester + N-terminal L-cysteinyl-[protein]. In terms of biological role, the C-terminal part of the hedgehog protein precursor displays an autoproteolysis activity that results in the cleavage of the full-length protein into two parts (N-product and C-product). In addition, the C-terminal part displays a cholesterol transferase activity that results by the covalent attachment of a cholesterol moiety to the C-terminal of the newly generated N-product. Once cleaved, the C-product has no signaling activity and diffuses from the cell. Functionally, the dually lipidated hedgehog protein N-product is a morphogen which is essential for a variety of patterning events during development. Establishes the anterior-posterior axis of the embryonic segments and patterns the larval imaginal disks. Binds to the patched (ptc) receptor, which functions in association with smoothened (smo), to activate the transcription of target genes wingless (wg), decapentaplegic (dpp) and ptc. In the absence of hh, ptc represses the constitutive signaling activity of smo through fused (fu). Essential component of a signaling pathway which regulates the Duox-dependent gut immune response to bacterial uracil; required to activate Cad99C-dependent endosome formation, norpA-dependent Ca2+ mobilization and p38 MAPK, which are essential steps in the Duox-dependent production of reactive oxygen species (ROS) in response to intestinal bacterial infection. During photoreceptor differentiation, it up-regulates transcription of Ubr3, which in turn promotes the hh-signaling pathway by mediating the ubiquitination and degradation of cos. This Drosophila ananassae (Fruit fly) protein is Protein hedgehog.